Consider the following 555-residue polypeptide: Cyclin-T1.2 (555 aa).

2 disordered regions span residues 315–429 and 505–555; these read SYKG…NSSK and PADS…GELV. The span at 321–335 shows a compositional bias: low complexity; that stretch reads KPLSNSSDSPSTRPS. Residues 341–359 are compositionally biased toward basic and acidic residues; sequence KNQKVVEQELMEQRMKEAA. Over residues 382-398 the composition is skewed to low complexity; it reads TSSSASNNSNHQNRSSS. Residues 521 to 543 are compositionally biased toward pro residues; the sequence is PDEPSPPVSQILLPPPPPPPILP.

It belongs to the cyclin family. Cyclin C subfamily.

Regulatory subunit of the cyclin-dependent kinase pair (CDK9/cyclin T) complex, also called positive transcription elongation factor B (P-TEFb), which is proposed to facilitate the transition from abortive to production elongation by phosphorylating the CTD (carboxy-terminal domain) of the large subunit of RNA polymerase II (RNAP II). The chain is Cyclin-T1.2 (cit-1.2) from Caenorhabditis elegans.